The following is a 128-amino-acid chain: L-ectoine synthase (128 aa).

The protein belongs to the ectoine synthase family.

It carries out the reaction (2S)-4-acetamido-2-aminobutanoate = L-ectoine + H2O. The protein operates within amine and polyamine biosynthesis; ectoine biosynthesis; L-ectoine from L-aspartate 4-semialdehyde: step 3/3. Its function is as follows. Catalyzes the circularization of gamma-N-acetyl-alpha,gamma-diaminobutyric acid (ADABA) to ectoine (1,4,5,6-tetrahydro-2-methyl-4-pyrimidine carboxylic acid), which is an excellent osmoprotectant. This chain is L-ectoine synthase, found in Aliivibrio fischeri (strain ATCC 700601 / ES114) (Vibrio fischeri).